Reading from the N-terminus, the 340-residue chain is UDP-N-acetylglucosamine--N-acetylmuramyl-(pentapeptide) pyrophosphoryl-undecaprenol N-acetylglucosamine transferase (340 aa).

Residues 15–17 (TGG), Asn127, Ser184, Ile230, and Gln275 contribute to the UDP-N-acetyl-alpha-D-glucosamine site.

The protein belongs to the glycosyltransferase 28 family. MurG subfamily.

It localises to the cell inner membrane. It catalyses the reaction di-trans,octa-cis-undecaprenyl diphospho-N-acetyl-alpha-D-muramoyl-L-alanyl-D-glutamyl-meso-2,6-diaminopimeloyl-D-alanyl-D-alanine + UDP-N-acetyl-alpha-D-glucosamine = di-trans,octa-cis-undecaprenyl diphospho-[N-acetyl-alpha-D-glucosaminyl-(1-&gt;4)]-N-acetyl-alpha-D-muramoyl-L-alanyl-D-glutamyl-meso-2,6-diaminopimeloyl-D-alanyl-D-alanine + UDP + H(+). The protein operates within cell wall biogenesis; peptidoglycan biosynthesis. Functionally, cell wall formation. Catalyzes the transfer of a GlcNAc subunit on undecaprenyl-pyrophosphoryl-MurNAc-pentapeptide (lipid intermediate I) to form undecaprenyl-pyrophosphoryl-MurNAc-(pentapeptide)GlcNAc (lipid intermediate II). This chain is UDP-N-acetylglucosamine--N-acetylmuramyl-(pentapeptide) pyrophosphoryl-undecaprenol N-acetylglucosamine transferase, found in Vesicomyosocius okutanii subsp. Calyptogena okutanii (strain HA).